We begin with the raw amino-acid sequence, 345 residues long: uncharacterized protein (345 aa).

A CNNM transmembrane domain is found at 1–198 (MDVLSAVLLA…LSEGLLDHEE (198 aa)). The next 2 membrane-spanning stretches (helical) occupy residues 3–23 (VLSA…FVGA) and 95–115 (VPPA…HVLL). CBS domains lie at 217–280 (AVPL…PQTV) and 285–342 (VVRP…MRDG). Residues 312-332 (LALVTADNGSVVGMVALEDVV) traverse the membrane as a helical segment.

This sequence belongs to the TerC family.

The protein localises to the cell membrane. This is an uncharacterized protein from Mycobacterium tuberculosis (strain ATCC 25618 / H37Rv).